Here is a 154-residue protein sequence, read N- to C-terminus: Transcriptional repressor NrdR (154 aa).

Residues 3–34 (CPFCGANDTKVIDSRLVAEGEQVRRRRECLAC) fold into a zinc finger. Residues 49–139 (PRLIKTDGSR…VYRRFQDLNE (91 aa)) form the ATP-cone domain.

This sequence belongs to the NrdR family. It depends on Zn(2+) as a cofactor.

Its function is as follows. Negatively regulates transcription of bacterial ribonucleotide reductase nrd genes and operons by binding to NrdR-boxes. The protein is Transcriptional repressor NrdR of Pseudomonas fluorescens (strain Pf0-1).